The primary structure comprises 746 residues: Ring assembly protein 3 (746 aa).

The protein localises to the cytoplasm. Its function is as follows. Essential for actinomyosin ring assembly during cytokinesis. Has a role, in conjunction with F-actin, in assembling myosin II-containing proteins, such as myo2, at the division site. The sequence is that of Ring assembly protein 3 (rng3) from Schizosaccharomyces pombe (strain 972 / ATCC 24843) (Fission yeast).